Consider the following 275-residue polypeptide: Melanoma-associated antigen B5 (275 aa).

Positions 1–33 are disordered; the sequence is MTSAGVFNAGSDERANSRDEEYPCSSEVSPSTE. Residues 11–21 show a composition bias toward basic and acidic residues; that stretch reads SDERANSRDEE. Positions 23-33 are enriched in low complexity; that stretch reads PCSSEVSPSTE. An MAGE domain is found at 40-239; the sequence is INIKVGLLEQ…GAFSSQYEEA (200 aa).

In terms of tissue distribution, expressed in testis. Not expressed in other normal tissues, but is expressed in tumors of different histological origins.

The chain is Melanoma-associated antigen B5 (MAGEB5) from Homo sapiens (Human).